The sequence spans 245 residues: Transcriptional regulatory protein VxrB (245 aa).

A Response regulatory domain is found at 31 to 142; the sequence is TLLLVEDDKN…ELFARIRAQL (112 aa). Position 78 is a 4-aspartylphosphate (D78). The segment at residues 151–245 is a DNA-binding region (ompR/PhoB-type); that stretch reads DSKVVTSNLT…LRGVGYKMKA (95 aa).

In terms of processing, phosphorylated by VxrA.

The protein resides in the cytoplasm. Functionally, member of the two-component regulatory system VxrB/VxrA involved in the regulation of diverses processes, including virulence, the type VI secretion system (T6SS) and biofilm formation. VxrB positively regulates the expression of the T6SS, a virulence nanomachine that directly translocates effectors into bacterial or host cells, thereby facilitating colonization by competing with sister cells and intestinal microbiota. In addition, it activates vpsL expression and biofilm formation, and represses motility. May regulate biofilm formation via its regulation of key biofilm regulators and cyclic di-GMP levels. Significantly contributes to both attack and defense via T6SS, while also influencing competition via regulation of biofilm matrix production. Is critical for colonization in the infant mouse model. In Vibrio cholerae serotype O1 (strain ATCC 39315 / El Tor Inaba N16961), this protein is Transcriptional regulatory protein VxrB.